The following is a 331-amino-acid chain: RNA/RNP complex-1-interacting phosphatase (331 aa).

The Tyrosine-protein phosphatase domain maps to 61–208 (FEKHLAPEEC…LRNGPIRKNW (148 aa)). Catalysis depends on C152, which acts as the Phosphocysteine intermediate. 153 to 158 (THGVNR) contributes to the substrate binding site. R158 (proton donor/acceptor) is an active-site residue.

The protein belongs to the protein-tyrosine phosphatase family. Non-receptor class dual specificity subfamily. In terms of assembly, monomer. May interact with SFRS7 and SFRS9/SRP30C.

The protein localises to the nucleus. Its subcellular location is the nucleus speckle. In terms of biological role, possesses RNA 5'-triphosphatase and diphosphatase activities, but displays a poor protein-tyrosine phosphatase activity. In addition, has phosphatase activity with ATP, ADP and O-methylfluorescein phosphate (in vitro). Binds to RNA. May participate in nuclear mRNA metabolism. This chain is RNA/RNP complex-1-interacting phosphatase (DUSP11), found in Bos taurus (Bovine).